The sequence spans 299 residues: Nucleoporin POM34 (299 aa).

Residues 1-39 (MKIQAGQLGLDDNDVPGPLPDTDSKPSSQSQNDTPMFKL) are disordered. Over residues 25–34 (KPSSQSQNDT) the composition is skewed to polar residues. 2 consecutive transmembrane segments (helical) span residues 64–84 (IMTN…IKFF) and 133–153 (LFHL…LSTV). The residue at position 270 (serine 270) is a Phosphoserine. At threonine 273 the chain carries Phosphothreonine. 2 positions are modified to phosphoserine: serine 292 and serine 294.

Component of the nuclear pore complex (NPC). NPC constitutes the exclusive means of nucleocytoplasmic transport. NPCs allow the passive diffusion of ions and small molecules and the active, nuclear transport receptor-mediated bidirectional transport of macromolecules such as proteins, RNAs, ribonucleoparticles (RNPs), and ribosomal subunits across the nuclear envelope. Due to its 8-fold rotational symmetry, all subunits are present with 8 copies or multiples thereof.

It localises to the nucleus. Its subcellular location is the nuclear pore complex. The protein resides in the nucleus membrane. Functionally, functions as a component of the nuclear pore complex (NPC). NPC components, collectively referred to as nucleoporins (NUPs), can play the role of both NPC structural components and of docking or interaction partners for transiently associated nuclear transport factors. The protein is Nucleoporin POM34 (POM34) of Saccharomyces cerevisiae (strain ATCC 204508 / S288c) (Baker's yeast).